A 150-amino-acid polypeptide reads, in one-letter code: Large ribosomal subunit protein bL9 (150 aa).

Belongs to the bacterial ribosomal protein bL9 family.

Its function is as follows. Binds to the 23S rRNA. This chain is Large ribosomal subunit protein bL9, found in Vibrio parahaemolyticus serotype O3:K6 (strain RIMD 2210633).